A 119-amino-acid polypeptide reads, in one-letter code: uncharacterized protein (119 aa).

The disordered stretch occupies residues 86 to 119 (KKQRMKMLTEQEEEEEEEEEEPPKPKKKVINRKK). Over residues 95 to 106 (EQEEEEEEEEEE) the composition is skewed to acidic residues. The span at 110 to 119 (PKKKVINRKK) shows a compositional bias: basic residues.

This is an uncharacterized protein from Sputnik virophage.